The chain runs to 684 residues: Fermitin family homolog 2 (684 aa).

Positions H40–K81 are interaction with membranes containing phosphatidylinositol phosphate. The disordered stretch occupies residues L141–E163. The 299-residue stretch at D279–F577 folds into the FERM domain. Positions K378–K474 constitute a PH domain. K381 is an a 1,2-diacyl-sn-glycero-3-phospho-(1D-myo-inositol-3,4,5-trisphosphate) binding site.

The protein belongs to the kindlin family.

It localises to the cytoplasm. The protein resides in the cell cortex. The protein localises to the cytoskeleton. It is found in the stress fiber. Its subcellular location is the cell junction. It localises to the focal adhesion. The protein resides in the membrane. The protein localises to the cell projection. It is found in the lamellipodium membrane. Its subcellular location is the nucleus. It localises to the myofibril. The protein resides in the sarcomere. The protein localises to the i band. It is found in the cell surface. Functionally, scaffolding protein that enhances integrin activation mediated by TLN1 and/or TLN2, but activates integrins only weakly by itself. Binds to membranes enriched in phosphoinositides. Enhances integrin-mediated cell adhesion onto the extracellular matrix and cell spreading; this requires both its ability to interact with integrins and with phospholipid membranes. Required for the assembly of focal adhesions. Participates in the connection between extracellular matrix adhesion sites and the actin cytoskeleton and also in the orchestration of actin assembly and cell shape modulation. Plays a role in the TGFB1 and integrin signaling pathways. Stabilizes active CTNNB1 and plays a role in the regulation of transcription mediated by CTNNB1 and TCF7L2/TCF4 and in Wnt signaling. Required for normal embryonic development, including normal heart morphogenesis and normal angiogenesis. The polypeptide is Fermitin family homolog 2 (fermt2) (Danio rerio (Zebrafish)).